The following is a 177-amino-acid chain: Large ribosomal subunit protein uL6 (177 aa).

Belongs to the universal ribosomal protein uL6 family. As to quaternary structure, part of the 50S ribosomal subunit.

This protein binds to the 23S rRNA, and is important in its secondary structure. It is located near the subunit interface in the base of the L7/L12 stalk, and near the tRNA binding site of the peptidyltransferase center. The polypeptide is Large ribosomal subunit protein uL6 (Beijerinckia indica subsp. indica (strain ATCC 9039 / DSM 1715 / NCIMB 8712)).